Consider the following 462-residue polypeptide: uncharacterized protein (462 aa).

A divalent metal cation contacts are provided by Asp12, His14, Asp48, Asn81, His179, and His202. Residues 258–291 adopt a coiled-coil conformation; the sequence is ESAETKAFLNEKEREAEEKLSDAVAELAQDAEVK.

Belongs to the metallophosphoesterase superfamily. A divalent metal cation is required as a cofactor.

This is an uncharacterized protein from Bacillus subtilis (strain 168).